Consider the following 125-residue polypeptide: Small ribosomal subunit protein uS13 (125 aa).

Residues 91–125 (HRRGLPARGQRTRTNARTRKGKRKTVAGKKKAGKK) form a disordered region.

It belongs to the universal ribosomal protein uS13 family. Part of the 30S ribosomal subunit. Forms a loose heterodimer with protein S19. Forms two bridges to the 50S subunit in the 70S ribosome.

Functionally, located at the top of the head of the 30S subunit, it contacts several helices of the 16S rRNA. In the 70S ribosome it contacts the 23S rRNA (bridge B1a) and protein L5 of the 50S subunit (bridge B1b), connecting the 2 subunits; these bridges are implicated in subunit movement. Contacts the tRNAs in the A and P-sites. This chain is Small ribosomal subunit protein uS13, found in Chloroherpeton thalassium (strain ATCC 35110 / GB-78).